The sequence spans 322 residues: MSKNLSIIGAGAWGSALAIALYDNFDTIYLHAHTQDEVKILKPKYSALYPNNIKITCDFSKLQNSKDILIVTPSYAFSEVLEKIKPLISSAHQIAWGTKGFDTTKRCFLYESFERIFPNRNGCVISGPSFAFEVATNKPTALVVASVDKNTRKHFAKLIQTTTIRAYTNADIIGVEIGGSIKNILAIAAGIAAGLGYGINTQAALITRGLAEMSRLGVSLGAKNSTFVGLSGLGDLVLTCSDDLSRNRRFGKELAFNHSIKSALYNIGSTVEGLNTLELILSIANKKQVEMPICEQVYQVTQGKITPTEVVNYLMSREQTNE.

The NADPH site is built by tryptophan 13, histidine 33, and lysine 99. Residues lysine 99, glycine 127, and serine 129 each coordinate sn-glycerol 3-phosphate. Position 131 (alanine 131) interacts with NADPH. Residues lysine 182, aspartate 235, serine 245, arginine 246, and asparagine 247 each contribute to the sn-glycerol 3-phosphate site. The active-site Proton acceptor is lysine 182. Residue arginine 246 participates in NADPH binding. Glutamate 272 is an NADPH binding site.

It belongs to the NAD-dependent glycerol-3-phosphate dehydrogenase family.

The protein resides in the cytoplasm. It carries out the reaction sn-glycerol 3-phosphate + NAD(+) = dihydroxyacetone phosphate + NADH + H(+). The enzyme catalyses sn-glycerol 3-phosphate + NADP(+) = dihydroxyacetone phosphate + NADPH + H(+). It functions in the pathway membrane lipid metabolism; glycerophospholipid metabolism. Catalyzes the reduction of the glycolytic intermediate dihydroxyacetone phosphate (DHAP) to sn-glycerol 3-phosphate (G3P), the key precursor for phospholipid synthesis. The sequence is that of Glycerol-3-phosphate dehydrogenase [NAD(P)+] from Ruthia magnifica subsp. Calyptogena magnifica.